We begin with the raw amino-acid sequence, 370 residues long: Protein-tyrosine sulfotransferase 1 (370 aa).

The Cytoplasmic segment spans residues 1-8; sequence MVGKLKQN. Residues 9 to 25 traverse the membrane as a helical; Signal-anchor for type II membrane protein segment; that stretch reads LLLACLVISSVTVFYLG. The Lumenal portion of the chain corresponds to 26–370; that stretch reads QHAMECHHRI…KEKPQTEQVE (345 aa). A glycan (N-linked (GlcNAc...) asparagine) is linked at Asn-60. 79–83 contributes to the 3'-phosphoadenylyl sulfate binding site; the sequence is RSGTT. Cys-97 and Cys-157 are oxidised to a cystine. Residue Glu-100 is the Proton donor/acceptor of the active site. Positions 102–106 are interaction with peptide substrate; that stretch reads RVIPR. 3'-phosphoadenylyl sulfate contacts are provided by Arg-184, Ser-192, and Arg-196. An intrachain disulfide couples Cys-226 to Cys-234. Tyr-239 is a binding site for 3'-phosphoadenylyl sulfate. Asn-262 carries an N-linked (GlcNAc...) asparagine glycan. Residues 286-295 and Lys-301 each bind 3'-phosphoadenylyl sulfate; that span reads STDQVIKPVN.

This sequence belongs to the protein sulfotransferase family. Homodimer. Can also form heterodimers with TPST2. N-glycosylated.

The protein localises to the golgi apparatus membrane. The catalysed reaction is L-tyrosyl-[protein] + 3'-phosphoadenylyl sulfate = O-sulfo-L-tyrosine-[protein] + adenosine 3',5'-bisphosphate + H(+). Catalyzes the O-sulfation of tyrosine residues within acidic motifs of polypeptides, using 3'-phosphoadenylyl sulfate (PAPS) as cosubstrate. In Rattus norvegicus (Rat), this protein is Protein-tyrosine sulfotransferase 1 (Tpst1).